A 424-amino-acid chain; its full sequence is UDP-N-acetylglucosamine 1-carboxyvinyltransferase (424 aa).

Residue 22-23 (KN) participates in phosphoenolpyruvate binding. Arginine 96 lines the UDP-N-acetyl-alpha-D-glucosamine pocket. Catalysis depends on cysteine 120, which acts as the Proton donor. 2-(S-cysteinyl)pyruvic acid O-phosphothioketal is present on cysteine 120. Residues 125-129 (RPVDQ), aspartate 312, and isoleucine 334 each bind UDP-N-acetyl-alpha-D-glucosamine.

Belongs to the EPSP synthase family. MurA subfamily.

The protein localises to the cytoplasm. The catalysed reaction is phosphoenolpyruvate + UDP-N-acetyl-alpha-D-glucosamine = UDP-N-acetyl-3-O-(1-carboxyvinyl)-alpha-D-glucosamine + phosphate. It participates in cell wall biogenesis; peptidoglycan biosynthesis. In terms of biological role, cell wall formation. Adds enolpyruvyl to UDP-N-acetylglucosamine. This Polynucleobacter necessarius subsp. necessarius (strain STIR1) protein is UDP-N-acetylglucosamine 1-carboxyvinyltransferase.